Here is a 61-residue protein sequence, read N- to C-terminus: Metallothionein-1D (61 aa).

The tract at residues Met-1–Cys-29 is beta. A divalent metal cation contacts are provided by Cys-5, Cys-7, Cys-13, Cys-15, Cys-19, Cys-21, Cys-24, Cys-26, Cys-29, Cys-33, Cys-34, Cys-36, Cys-37, Cys-41, Cys-44, Cys-48, Cys-50, Cys-57, Cys-59, and Cys-60. An alpha region spans residues Lys-30 to Ala-61.

This sequence belongs to the metallothionein superfamily. Type 1 family. As to quaternary structure, monomer.

In terms of biological role, metallothioneins have a high content of cysteine residues that bind various heavy metals; these proteins are transcriptionally regulated by both heavy metals and glucocorticoids. The protein is Metallothionein-1D (MT1D) of Sus scrofa (Pig).